Here is a 331-residue protein sequence, read N- to C-terminus: MNLKNRHFLKLLDFTPEEITAYLDLAAELKAAKKAGREIQRMKGKNIALIFEKTSTRTRCAFEVAARDQGAGVTYLEPSASQIGHKESIKDTARVLGRMYDAIEYRGFGQEVVEELAKYAGVPVFNGLTNEFHPTQMLADALTMREHSGKPLNQTAFAYVGDARYNMGNSLLILGAKLGMDVRIGAPQSLWPSEGIIAAAHAAAKETGAKITLTENAHEAVKNVDFIHTDVWVSMGEPKEVWQERIDLLKDYRVTPELMAASGNPQVKFMHCLPAFHNRETKVGEWIYETFGLNGVEVTEEIFESPASIVFDQAENRMHTIKAVMVAALGD.

Carbamoyl phosphate contacts are provided by residues 55–58 (STRT), glutamine 82, arginine 106, and 133–136 (HPTQ). L-ornithine contacts are provided by residues asparagine 166, aspartate 230, and 234 to 235 (SM). Carbamoyl phosphate is bound by residues 272–273 (CL) and arginine 317.

The protein belongs to the aspartate/ornithine carbamoyltransferase superfamily. OTCase family.

It localises to the cytoplasm. The catalysed reaction is carbamoyl phosphate + L-ornithine = L-citrulline + phosphate + H(+). It participates in amino-acid biosynthesis; L-arginine biosynthesis; L-arginine from L-ornithine and carbamoyl phosphate: step 1/3. Its function is as follows. Reversibly catalyzes the transfer of the carbamoyl group from carbamoyl phosphate (CP) to the N(epsilon) atom of ornithine (ORN) to produce L-citrulline. In Neisseria meningitidis serogroup B (strain ATCC BAA-335 / MC58), this protein is Ornithine carbamoyltransferase (argF).